A 408-amino-acid chain; its full sequence is DNA primase DnaG (408 aa).

The Toprim domain maps to 171–250 (DAIIIVEGRA…AYSPRGKSVE (80 aa)). Mg(2+)-binding residues include Glu-177, Asp-219, and Asp-221. The segment at 276–323 (AEENVERLPPSAAPAEVRAPAGAGRTSEGERPPRREWDSKPPSTLGEH) is disordered. A compositionally biased stretch (low complexity) spans 284 to 298 (PPSAAPAEVRAPAGA). The segment covering 302–314 (SEGERPPRREWDS) has biased composition (basic and acidic residues).

The protein belongs to the archaeal DnaG primase family. As to quaternary structure, forms a ternary complex with MCM helicase and DNA. The cofactor is Mg(2+).

It catalyses the reaction ssDNA + n NTP = ssDNA/pppN(pN)n-1 hybrid + (n-1) diphosphate.. Its function is as follows. RNA polymerase that catalyzes the synthesis of short RNA molecules used as primers for DNA polymerase during DNA replication. The sequence is that of DNA primase DnaG from Methanoculleus marisnigri (strain ATCC 35101 / DSM 1498 / JR1).